Here is a 204-residue protein sequence, read N- to C-terminus: Small ribosomal subunit protein uS4 (204 aa).

Residues 95-157 enclose the S4 RNA-binding domain; that stretch reads RRLDNTVFRM…KGIHSIIRHN (63 aa).

Belongs to the universal ribosomal protein uS4 family. As to quaternary structure, part of the 30S ribosomal subunit. Contacts protein S5. The interaction surface between S4 and S5 is involved in control of translational fidelity.

Functionally, one of the primary rRNA binding proteins, it binds directly to 16S rRNA where it nucleates assembly of the body of the 30S subunit. In terms of biological role, with S5 and S12 plays an important role in translational accuracy. This chain is Small ribosomal subunit protein uS4, found in Treponema pallidum (strain Nichols).